A 61-amino-acid chain; its full sequence is Small ribosomal subunit protein uS14 (61 aa).

Zn(2+) is bound by residues Cys24, Cys27, Cys40, and Cys43.

The protein belongs to the universal ribosomal protein uS14 family. Zinc-binding uS14 subfamily. As to quaternary structure, part of the 30S ribosomal subunit. Contacts proteins S3 and S10. The cofactor is Zn(2+).

In terms of biological role, binds 16S rRNA, required for the assembly of 30S particles and may also be responsible for determining the conformation of the 16S rRNA at the A site. This Bifidobacterium adolescentis (strain ATCC 15703 / DSM 20083 / NCTC 11814 / E194a) protein is Small ribosomal subunit protein uS14.